Here is a 748-residue protein sequence, read N- to C-terminus: Rho GTPase-activating protein 24 (748 aa).

The tract at residues 1–20 is disordered; the sequence is MEENNDSTENPQQGQGRQNA. Positions 7 to 18 are enriched in polar residues; sequence STENPQQGQGRQ. The PH domain maps to 19–125; the sequence is NAIKCGWLRK…WVKSIRRVIW (107 aa). The Rho-GAP domain maps to 135 to 329; it reads QKLEDTVRYE…VMISKHDCLF (195 aa). Disordered stretches follow at residues 354 to 476 and 582 to 641; these read TMGQ…GTHS and DFFG…SSNH. Polar residues-rich tracts occupy residues 356-374 and 382-405; these read GQLQNKENNNTKDSPSRQC and PQRSSMNNGSPTALSGSKTNSPKN. Residues serine 369, serine 391, serine 396, serine 398, serine 402, serine 413, serine 415, and serine 437 each carry the phosphoserine modification. Residues 432–476 show a composition bias toward polar residues; it reads IVTNGSFSSSNAEGLEKTQTTPNGSLQARRSSSLKVSGTKMGTHS. Threonine 452 is modified (phosphothreonine). Positions 600 to 615 are enriched in basic and acidic residues; the sequence is DLSHPRDYESKSDHRS. The segment covering 617 to 641 has biased composition (low complexity); it reads GGRSSRATSSSDNSETFVGNSSSNH. The stretch at 649-729 forms a coiled coil; that stretch reads SSLKQEMTKQ…KEMEQFFSTF (81 aa).

As to quaternary structure, interacts with FLNA. In terms of processing, phosphorylated by ROCK, leading to activate the RacGAP activity. In terms of tissue distribution, isoform 1 is widely expressed with a higher level in kidney. Isoform 2 is mainly expressed in endothelial cells.

It localises to the cytoplasm. The protein localises to the cytoskeleton. The protein resides in the cell junction. It is found in the adherens junction. Its subcellular location is the focal adhesion. It localises to the cell projection. In terms of biological role, rho GTPase-activating protein involved in cell polarity, cell morphology and cytoskeletal organization. Acts as a GTPase activator for the Rac-type GTPase by converting it to an inactive GDP-bound state. Controls actin remodeling by inactivating Rac downstream of Rho leading to suppress leading edge protrusion and promotes cell retraction to achieve cellular polarity. Able to suppress RAC1 and CDC42 activity in vitro. Overexpression induces cell rounding with partial or complete disruption of actin stress fibers and formation of membrane ruffles, lamellipodia, and filopodia. Isoform 2 is a vascular cell-specific GAP involved in modulation of angiogenesis. In Homo sapiens (Human), this protein is Rho GTPase-activating protein 24 (ARHGAP24).